The primary structure comprises 360 residues: MLLLLAEYLQQFYKGFAVFQYLTLRGILGVLTALVLSLCYGPWMIRTLQNRQIGQSVRNDGPQSHLSKSGTPTMGGALILSSIGVSTLLWADLSNRYVWVVLLVTLLFGAIGWVDDYRKVIEKNSRGLPSRWKYFWQSVFGLGAAIFLYMTASTPVETTLILPMLKDYSIPLGAGFIVLTYFVIVGSSNAVNLTDGLDGLAIMPTVMVGGGLGIFCYLSGNVKFAEYLLIPYVPGAGELIVFCGALIGAGLGFLWFNTYPAQVFMGDVGALALGAALGTIAVIVRQEIVLFIMGGVFVMETLSVVIQVASFKLTGRRVFRMAPIHHHFELKGWPEPRVIVRFWIITVILVLIGLATLKLR.

Transmembrane regions (helical) follow at residues Phe16 to Leu36, Thr73 to Leu93, Tyr97 to Tyr117, Tyr134 to Thr154, Tyr168 to Ser188, Gly199 to Ser219, Ala236 to Phe256, Val263 to Ile283, Ile288 to Val308, and Val338 to Lys358.

The protein belongs to the glycosyltransferase 4 family. MraY subfamily. The cofactor is Mg(2+).

It localises to the cell inner membrane. The catalysed reaction is UDP-N-acetyl-alpha-D-muramoyl-L-alanyl-gamma-D-glutamyl-meso-2,6-diaminopimeloyl-D-alanyl-D-alanine + di-trans,octa-cis-undecaprenyl phosphate = di-trans,octa-cis-undecaprenyl diphospho-N-acetyl-alpha-D-muramoyl-L-alanyl-D-glutamyl-meso-2,6-diaminopimeloyl-D-alanyl-D-alanine + UMP. Its pathway is cell wall biogenesis; peptidoglycan biosynthesis. Catalyzes the initial step of the lipid cycle reactions in the biosynthesis of the cell wall peptidoglycan: transfers peptidoglycan precursor phospho-MurNAc-pentapeptide from UDP-MurNAc-pentapeptide onto the lipid carrier undecaprenyl phosphate, yielding undecaprenyl-pyrophosphoryl-MurNAc-pentapeptide, known as lipid I. The polypeptide is Phospho-N-acetylmuramoyl-pentapeptide-transferase (Pseudomonas fluorescens (strain Pf0-1)).